A 505-amino-acid chain; its full sequence is Catalase (505 aa).

Residues histidine 56 and asparagine 129 contribute to the active site. Tyrosine 339 serves as a coordination point for heme.

The protein belongs to the catalase family. The cofactor is heme.

It is found in the cytoplasm. It carries out the reaction 2 H2O2 = O2 + 2 H2O. Decomposes hydrogen peroxide into water and oxygen; serves to protect cells from the toxic effects of hydrogen peroxide. The protein is Catalase (katA) of Helicobacter pylori (strain ATCC 700392 / 26695) (Campylobacter pylori).